The following is a 206-amino-acid chain: U-scoloptoxin(08)-Cw1a (206 aa).

The signal sequence occupies residues methionine 1–alanine 24. Residues serine 25–arginine 164 constitute a propeptide that is removed on maturation. The RLWRNWE 1; approximate repeat unit spans residues arginine 37–glutamate 43. An RLWRNWE 2; approximate repeat occupies arginine 71–glutamate 77. An RLWRNWE 3; approximate repeat occupies arginine 104–glutamate 110. The stretch at arginine 137 to glutamate 143 is one RLWRNWE 4 repeat. The stretch at arginine 164–aspartate 170 is one RLWRNWE 5; approximate repeat.

Belongs to the scoloptoxin-08 family. In terms of processing, contains 3 disulfide bonds. In terms of tissue distribution, expressed by the venom gland.

The protein localises to the secreted. The protein is U-scoloptoxin(08)-Cw1a of Cormocephalus westwoodi (Westwood's green centipede).